The sequence spans 625 residues: Interferon-induced GTP-binding protein MxE (625 aa).

Positions 40–313 constitute a Dynamin-type G domain; the sequence is DLNLPAIAVI…LVEHIAKNLP (274 aa). Residues 50–57 form a G1 motif region; that stretch reads GDQSSGKS. 50–57 contacts GTP; it reads GDQSSGKS. Positions 75-77 are G2 motif; that stretch reads VTR. The segment at 151-154 is G3 motif; sequence DLPG. Residues 151-155 and 220-223 each bind GTP; these read DLPGI and TKPD. The tract at residues 220–223 is G4 motif; it reads TKPD. The interval 252–255 is G5 motif; the sequence is KCRG. The region spanning 536–625 is the GED domain; sequence VREMAYHLTS…RVLSKFVHSA (90 aa).

This sequence belongs to the TRAFAC class dynamin-like GTPase superfamily. Dynamin/Fzo/YdjA family.

The protein resides in the cytoplasm. This is Interferon-induced GTP-binding protein MxE (mxe) from Danio rerio (Zebrafish).